We begin with the raw amino-acid sequence, 308 residues long: Ribosomal RNA small subunit methyltransferase H (308 aa).

S-adenosyl-L-methionine contacts are provided by residues 32–34, D51, F78, D99, and Q106; that span reads GGH.

It belongs to the methyltransferase superfamily. RsmH family.

It localises to the cytoplasm. It catalyses the reaction cytidine(1402) in 16S rRNA + S-adenosyl-L-methionine = N(4)-methylcytidine(1402) in 16S rRNA + S-adenosyl-L-homocysteine + H(+). In terms of biological role, specifically methylates the N4 position of cytidine in position 1402 (C1402) of 16S rRNA. This is Ribosomal RNA small subunit methyltransferase H from Campylobacter curvus (strain 525.92).